A 90-amino-acid chain; its full sequence is Small ribosomal subunit protein bS20 (90 aa).

Belongs to the bacterial ribosomal protein bS20 family.

Binds directly to 16S ribosomal RNA. This chain is Small ribosomal subunit protein bS20, found in Rickettsia felis (strain ATCC VR-1525 / URRWXCal2) (Rickettsia azadi).